The chain runs to 129 residues: Thioredoxin H7 (129 aa).

In terms of domain architecture, Thioredoxin spans 6–129 (SSVHDVHSSM…LVKKIEQHRV (124 aa)). Residues Cys-55 and Cys-58 each act as nucleophile in the active site. The cysteines at positions 55 and 58 are disulfide-linked.

Belongs to the thioredoxin family. Plant H-type subfamily.

The protein resides in the cytoplasm. In terms of biological role, probable thiol-disulfide oxidoreductase that may be involved in the redox regulation of a number of cytosolic enzymes. This is Thioredoxin H7 (TRX7) from Arabidopsis thaliana (Mouse-ear cress).